Here is a 406-residue protein sequence, read N- to C-terminus: 5-hydroxytryptamine receptor 4 (406 aa).

The Extracellular portion of the chain corresponds to 1–19 (MDRLDANVSSNEGFGSVEK). An N-linked (GlcNAc...) asparagine glycan is attached at Asn-7. Residues 20–44 (VVLLTFFAMVILMAILGNLLVMVAV) form a helical membrane-spanning segment. Residues 45 to 54 (CRDRQLRKIK) are Cytoplasmic-facing. The helical transmembrane segment at 55-78 (TNYFIVSLAFADLLVSVLVNAFGA) threads the bilayer. At 79 to 92 (IELVQDIWFYGEMF) the chain is on the extracellular side. A helical membrane pass occupies residues 93-117 (CLVRTSLDVLLTTASIFHLCCISLD). Cysteines 93 and 184 form a disulfide. Position 100 (Asp-100) interacts with serotonin. Residues 118–133 (RYYAICCQPLVYRNKM) are Cytoplasmic-facing. Residues 134-157 (TPLRIALMLGGCWVIPMFISFLPI) traverse the membrane as a helical segment. Residues 158-188 (MQGWNNIGIVDVIEKRKFNHNSNSTFCVFMV) are Extracellular-facing. Residues 189–212 (NKPYAITCSVVAFYIPFLLMVLAY) traverse the membrane as a helical segment. Over 213–257 (YRIYVTAKEHAQQIQMLQRAGATSESRPQTADQHSTHRMRTETKA) the chain is Cytoplasmic. A helical transmembrane segment spans residues 258-283 (AKTLCVIMGCFCFCWAPFFVTNIVDP). Asn-279 lines the serotonin pocket. At 284–290 (FIDYTVP) the chain is on the extracellular side. Residues 291–314 (EKVWTAFLWLGYINSGLNPFLYAF) form a helical membrane-spanning segment. Over 315 to 406 (LNKSFRRAFL…DSCSLKRSQS (92 aa)) the chain is Cytoplasmic.

The protein belongs to the G-protein coupled receptor 1 family. As to quaternary structure, interacts (via C-terminus 330-346 AA) with GRK5; this interaction is promoted by 5-HT (serotonin). In terms of tissue distribution, in brain, isoform 5-HT4S is restricted to the striatum. In peripheral tissues, differential expression is also observed in the atrium of the heart where only isoform 5-HT4S is detectable. In brain, isoform 5-HT4L is expressed throughout the brain, except in the cerebellum.

The protein localises to the cell membrane. The protein resides in the endosome membrane. In terms of biological role, G-protein coupled receptor for 5-hydroxytryptamine (serotonin), a biogenic hormone that functions as a neurotransmitter, a hormone and a mitogen. Ligand binding causes a conformation change that triggers signaling via guanine nucleotide-binding proteins (G proteins) and modulates the activity of downstream effectors. HTR4 is coupled to G(s) G alpha proteins and mediates activation of adenylate cyclase activity. The protein is 5-hydroxytryptamine receptor 4 (Htr4) of Rattus norvegicus (Rat).